Consider the following 344-residue polypeptide: tRNA N6-adenosine threonylcarbamoyltransferase (344 aa).

His112 and His116 together coordinate Fe cation. Substrate is bound by residues 135–139, Asp168, Gly181, and Asn271; that span reads LVSGG. Residue Asp299 participates in Fe cation binding. The segment at 323 to 344 is disordered; that stretch reads RARPRWPLDPEAEPVRGAGVKA.

This sequence belongs to the KAE1 / TsaD family. Fe(2+) serves as cofactor.

The protein localises to the cytoplasm. The catalysed reaction is L-threonylcarbamoyladenylate + adenosine(37) in tRNA = N(6)-L-threonylcarbamoyladenosine(37) in tRNA + AMP + H(+). Its function is as follows. Required for the formation of a threonylcarbamoyl group on adenosine at position 37 (t(6)A37) in tRNAs that read codons beginning with adenine. Is involved in the transfer of the threonylcarbamoyl moiety of threonylcarbamoyl-AMP (TC-AMP) to the N6 group of A37, together with TsaE and TsaB. TsaD likely plays a direct catalytic role in this reaction. This chain is tRNA N6-adenosine threonylcarbamoyltransferase, found in Erythrobacter litoralis (strain HTCC2594).